The primary structure comprises 87 residues: Acylphosphatase (87 aa).

Positions 2 to 87 (RLTALVSGHV…ETGLREFHIY (86 aa)) constitute an Acylphosphatase-like domain. Active-site residues include Arg17 and Asn35.

This sequence belongs to the acylphosphatase family.

The enzyme catalyses an acyl phosphate + H2O = a carboxylate + phosphate + H(+). This Deinococcus radiodurans (strain ATCC 13939 / DSM 20539 / JCM 16871 / CCUG 27074 / LMG 4051 / NBRC 15346 / NCIMB 9279 / VKM B-1422 / R1) protein is Acylphosphatase (acyP).